The chain runs to 694 residues: Elongation factor G (694 aa).

The 280-residue stretch at 8 to 287 (EDYRNFGIMA…AVVEFLPAPT (280 aa)) folds into the tr-type G domain. GTP is bound by residues 17–24 (AHIDAGKT), 86–90 (DTPGH), and 140–143 (NKMD).

It belongs to the TRAFAC class translation factor GTPase superfamily. Classic translation factor GTPase family. EF-G/EF-2 subfamily.

It localises to the cytoplasm. Functionally, catalyzes the GTP-dependent ribosomal translocation step during translation elongation. During this step, the ribosome changes from the pre-translocational (PRE) to the post-translocational (POST) state as the newly formed A-site-bound peptidyl-tRNA and P-site-bound deacylated tRNA move to the P and E sites, respectively. Catalyzes the coordinated movement of the two tRNA molecules, the mRNA and conformational changes in the ribosome. The protein is Elongation factor G of Brucella melitensis biotype 2 (strain ATCC 23457).